A 200-amino-acid polypeptide reads, in one-letter code: Putative TLC domain-containing protein L438 (200 aa).

The TLC domain occupies 1–193; that stretch reads MDYKQSNLFL…ILKILRAKLF (193 aa). Transmembrane regions (helical) follow at residues 9 to 29, 43 to 63, 74 to 94, 96 to 116, 131 to 151, and 165 to 185; these read FLFPIGLGSTYIFYKKICGTF, THGILMLTLVYFLSDYYLMIV, VHHFIGIVSIYFSYMKYYYLI, YLFAYLTFELSTPFLNIAIKY, LAFFILFTVVRIIFGTYLWFV, and YLIVLPTILQFLNYWWYYRIL.

The protein localises to the membrane. This chain is Putative TLC domain-containing protein L438, found in Acanthamoeba polyphaga mimivirus (APMV).